Here is a 505-residue protein sequence, read N- to C-terminus: OVARIAN TUMOR DOMAIN-containing deubiquitinating enzyme 6 (505 aa).

A disordered region spans residues 1 to 191 (MTRILVQRGS…NSSDEHMPCY (191 aa)). Low complexity predominate over residues 9-30 (GSSGSSSNSSRPSSSSSSSSGS). The span at 51-72 (DEKQEEVTVVEKAECSDAKDVA) shows a compositional bias: basic and acidic residues. Over residues 73–86 (VDSDEPADREDDEG) the composition is skewed to acidic residues. The segment covering 115–124 (PPVPAPPPKP) has biased composition (pro residues). A compositionally biased stretch (low complexity) spans 159 to 173 (SSRSSPTGSHPSSPR). The segment covering 174–188 (SHSENEGYNSSDEHM) has biased composition (basic and acidic residues). One can recognise an OTU domain in the interval 216–339 (FEIRRMLEDG…GNHYNSLVDP (124 aa)). D224 is a catalytic residue. The active-site Nucleophile is C227. Residue H332 is part of the active site. Residues 416 to 447 (RIGPKESSTSNAETSSSGARPSGSDSKPAEAV) are disordered. Low complexity predominate over residues 421–441 (ESSTSNAETSSSGARPSGSDS). The UBA domain occupies 446-491 (AVKEKTVLSSSIEMVLSMGFSYAQAMEAYSIFGDDVDSMVCYVLET).

Belongs to the peptidase C85 family. Interacts with KDM1C. Mostly expressed in stems flowers and siliques, and, to a lower extent, in leaves, roots and seedlings.

It is found in the nucleus. It localises to the cytoplasm. The catalysed reaction is Thiol-dependent hydrolysis of ester, thioester, amide, peptide and isopeptide bonds formed by the C-terminal Gly of ubiquitin (a 76-residue protein attached to proteins as an intracellular targeting signal).. Hydrolase that can remove conjugated ubiquitin from proteins in vitro and may therefore play an important regulatory role at the level of protein turnover by preventing degradation. Binds chromatin (e.g. nucleosomes and histones) and has enzymatic histone deubiquitinase activity, specific for the H2B histone. Can both repress (e.g. OSR2) and promote (e.g. AN3) the expression of target genes by associating with chromatin, deubiquitinating H2B and regulating its euchromatic histone marks (e.g. H3ac and H3K4me). In association with LDL1/KDM1C, involved in transcriptional gene repression via histone deubiquitination and demethylation. Promotes the concerted epigenetic regulation and repression (e.g. the removal of euchromatic histone acetylation, ubiquitination, and methylation marks) of a set of genes (e.g. GA20OX, WUS, OSR2, ARL and ABI5) that collectively limit plant growth thus stimulating plant growth and increasing cell size. This Arabidopsis thaliana (Mouse-ear cress) protein is OVARIAN TUMOR DOMAIN-containing deubiquitinating enzyme 6.